The chain runs to 396 residues: Elongation factor Tu (396 aa).

Residues 10-206 form the tr-type G domain; sequence KPHINVGTIG…ALDSYIPEPQ (197 aa). The G1 stretch occupies residues 19–26; that stretch reads GHVDHGKT. Residue 19–26 participates in GTP binding; that stretch reads GHVDHGKT. Mg(2+) is bound at residue Thr-26. The tract at residues 60–64 is G2; the sequence is GITIN. The tract at residues 81 to 84 is G3; sequence DCPG. Residues 81-85 and 136-139 each bind GTP; these read DCPGH and NKAD. The interval 136–139 is G4; sequence NKAD. The tract at residues 174–176 is G5; the sequence is SAL.

The protein belongs to the TRAFAC class translation factor GTPase superfamily. Classic translation factor GTPase family. EF-Tu/EF-1A subfamily. In terms of assembly, monomer.

The protein localises to the cytoplasm. The enzyme catalyses GTP + H2O = GDP + phosphate + H(+). GTP hydrolase that promotes the GTP-dependent binding of aminoacyl-tRNA to the A-site of ribosomes during protein biosynthesis. This Nitrosospira multiformis (strain ATCC 25196 / NCIMB 11849 / C 71) protein is Elongation factor Tu.